The following is a 383-amino-acid chain: Chorismate synthase (383 aa).

NADP(+) is bound by residues Arg-39 and Arg-45. FMN is bound by residues 128 to 130, Gly-291, 306 to 310, and Arg-332; these read RAS and KPIAT.

Belongs to the chorismate synthase family. Homotetramer. FMNH2 serves as cofactor.

It carries out the reaction 5-O-(1-carboxyvinyl)-3-phosphoshikimate = chorismate + phosphate. It functions in the pathway metabolic intermediate biosynthesis; chorismate biosynthesis; chorismate from D-erythrose 4-phosphate and phosphoenolpyruvate: step 7/7. In terms of biological role, catalyzes the anti-1,4-elimination of the C-3 phosphate and the C-6 proR hydrogen from 5-enolpyruvylshikimate-3-phosphate (EPSP) to yield chorismate, which is the branch point compound that serves as the starting substrate for the three terminal pathways of aromatic amino acid biosynthesis. This reaction introduces a second double bond into the aromatic ring system. This is Chorismate synthase from Thermus thermophilus (strain ATCC 27634 / DSM 579 / HB8).